The primary structure comprises 379 residues: Glutamate 5-kinase (379 aa).

Position 14 (Lys-14) interacts with ATP. Substrate is bound by residues Ser-54, Asp-141, and Asn-153. Residues 173-174 (TD) and 215-221 (TGGMATK) each bind ATP. Positions 280–358 (KGRLLLDIGA…DEIEPLLGYD (79 aa)) constitute a PUA domain.

The protein belongs to the glutamate 5-kinase family.

The protein resides in the cytoplasm. The enzyme catalyses L-glutamate + ATP = L-glutamyl 5-phosphate + ADP. It functions in the pathway amino-acid biosynthesis; L-proline biosynthesis; L-glutamate 5-semialdehyde from L-glutamate: step 1/2. Its function is as follows. Catalyzes the transfer of a phosphate group to glutamate to form L-glutamate 5-phosphate. The chain is Glutamate 5-kinase from Shewanella amazonensis (strain ATCC BAA-1098 / SB2B).